Consider the following 211-residue polypeptide: MSGTLVLVRHGQSDWNLKNLFTGWKDPDLTELGIQEANTGGAALAEYGIKFDVAYTSVLVRAQHTLKLILDKVGQPDLLTIRDQALNERDYGDLSGLNKDDARAKWGEEQVHIWRRSYDVPPPGGESLRDTGARVWPYYLTEILPRVLRGEKVLVAAHGNSLRSLVMVLDKLSREGVLALNLATGVPMVYKLKADSTVASKEVLGDMSGAH.

Residues 9 to 16, 22 to 23, Arg61, 88 to 91, Lys99, 115 to 116, and 159 to 160 contribute to the substrate site; these read RHGQSDWN, TG, ERDY, RR, and GN. His10 acts as the Tele-phosphohistidine intermediate in catalysis. Glu88 serves as the catalytic Proton donor/acceptor.

It belongs to the phosphoglycerate mutase family. BPG-dependent PGAM subfamily. In terms of assembly, homodimer.

It catalyses the reaction (2R)-2-phosphoglycerate = (2R)-3-phosphoglycerate. It functions in the pathway carbohydrate degradation; glycolysis; pyruvate from D-glyceraldehyde 3-phosphate: step 3/5. Catalyzes the interconversion of 2-phosphoglycerate and 3-phosphoglycerate. In Rhizobium johnstonii (strain DSM 114642 / LMG 32736 / 3841) (Rhizobium leguminosarum bv. viciae), this protein is 2,3-bisphosphoglycerate-dependent phosphoglycerate mutase.